The sequence spans 238 residues: Fatty acid metabolism regulator protein (238 aa).

One can recognise an HTH gntR-type domain in the interval 6-74 (KGPASFAEKY…HGKPTRVNNF (69 aa)). Positions 34-53 (ERELSELIGVTRTTLREVLQ) form a DNA-binding region, H-T-H motif.

As to quaternary structure, homodimer.

Its subcellular location is the cytoplasm. Functionally, multifunctional regulator of fatty acid metabolism. The protein is Fatty acid metabolism regulator protein of Shewanella baltica (strain OS223).